We begin with the raw amino-acid sequence, 452 residues long: Serine carboxypeptidase-like 26 (452 aa).

Residues 1 to 20 (MARLLLLFFFFLILLHYASC) form the signal peptide. Asn52 and Asn138 each carry an N-linked (GlcNAc...) asparagine glycan. Cystine bridges form between Cys87–Cys338, Cys244–Cys256, and Cys280–Cys306. The active site involves Ser180. Asn327 carries N-linked (GlcNAc...) asparagine glycosylation. Catalysis depends on residues Asp375 and His427.

Belongs to the peptidase S10 family. Ubiquitous.

It is found in the secreted. Functionally, probable carboxypeptidase. This Arabidopsis thaliana (Mouse-ear cress) protein is Serine carboxypeptidase-like 26 (SCPL26).